The chain runs to 113 residues: Nucleoid-associated protein EUBREC_0329 (113 aa).

Residues 1–12 (MARRGGFPGGMP) show a composition bias toward gly residues. Residues 1-45 (MARRGGFPGGMPGNMNNLMKQAQKMQRQMEEAQKQLEDAEVTAKA) are disordered. Residues 27–37 (RQMEEAQKQLE) are compositionally biased toward basic and acidic residues.

It belongs to the YbaB/EbfC family. In terms of assembly, homodimer.

It localises to the cytoplasm. Its subcellular location is the nucleoid. In terms of biological role, binds to DNA and alters its conformation. May be involved in regulation of gene expression, nucleoid organization and DNA protection. This is Nucleoid-associated protein EUBREC_0329 from Agathobacter rectalis (strain ATCC 33656 / DSM 3377 / JCM 17463 / KCTC 5835 / VPI 0990) (Eubacterium rectale).